The chain runs to 209 residues: Large ribosomal subunit protein uL3 (209 aa).

The interval 133-152 is disordered; that stretch reads THGNSLSHRVPGSIGQNQTP. Glutamine 150 is modified (N5-methylglutamine).

Belongs to the universal ribosomal protein uL3 family. In terms of assembly, part of the 50S ribosomal subunit. Forms a cluster with proteins L14 and L19. Post-translationally, methylated by PrmB.

Functionally, one of the primary rRNA binding proteins, it binds directly near the 3'-end of the 23S rRNA, where it nucleates assembly of the 50S subunit. The polypeptide is Large ribosomal subunit protein uL3 (Sodalis glossinidius (strain morsitans)).